Here is a 348-residue protein sequence, read N- to C-terminus: MTSPATLKVLNAYLDNPTPTLEEAIEVFTPLTVGEYDDVHIAALLATIRTRGEQFADIAGAAKAFLAAARPFPITGAGLLDSAGTGGDGANTINITTGASLIAASGGVKLVKHGNRSVSSKSGSADVLEALNIPLGLDVDRAVKWFEASNFTFLFAPAYNPAIAHVQPVRQALKFPTIFNTLGPLLSPARPERQIMGVANANHGQLIAEVFRELGRTRALVVHGAGTDEIAVHGTTLVWELKEDGTIEHYTIEPEDLGLGRYTLEDLVGGLGTENAEAMRATFAGTGPDAHRDALAASAGAMFYLNGDVDSLKDGAQKALSLLADGTTQAWLAKHEEIDYSEKESSND.

Residues Gly84, 87-88, Thr92, 94-97, 112-120, and Ser124 contribute to the 5-phospho-alpha-D-ribose 1-diphosphate site; these read GD, NITT, and KHGNRSVSS. Gly84 contacts anthranilate. Thr96 serves as a coordination point for Mg(2+). Anthranilate is bound at residue Asn115. Arg170 serves as a coordination point for anthranilate. Mg(2+) contacts are provided by Asp228 and Glu229.

The protein belongs to the anthranilate phosphoribosyltransferase family. As to quaternary structure, homodimer. The cofactor is Mg(2+).

The catalysed reaction is N-(5-phospho-beta-D-ribosyl)anthranilate + diphosphate = 5-phospho-alpha-D-ribose 1-diphosphate + anthranilate. It participates in amino-acid biosynthesis; L-tryptophan biosynthesis; L-tryptophan from chorismate: step 2/5. Functionally, catalyzes the transfer of the phosphoribosyl group of 5-phosphorylribose-1-pyrophosphate (PRPP) to anthranilate to yield N-(5'-phosphoribosyl)-anthranilate (PRA). The chain is Anthranilate phosphoribosyltransferase from Corynebacterium glutamicum (strain R).